The primary structure comprises 421 residues: Proton extrusion protein PxcA (421 aa).

A disordered region spans residues 124-153; it reads PTVHSSNPDDSQLMTSKNNSKPVPDPESDD. The segment covering 125 to 144 has biased composition (polar residues); that stretch reads TVHSSNPDDSQLMTSKNNSK. A run of 4 helical transmembrane segments spans residues 203 to 223, 298 to 318, 345 to 365, and 381 to 401; these read FVLL…SFIV, AIKN…LLIS, IIIL…WEVI, and FIFL…KYWI.

The protein belongs to the CemA family.

The protein localises to the cell inner membrane. Functionally, required for H(+) efflux immediately after light irradiation to form a rapid H(+) concentration gradient across the thylakoid membranes. Together with PxcL, contributes to transient H(+) uptake following dark to light transition. This chain is Proton extrusion protein PxcA, found in Synechococcus sp. (strain ATCC 27144 / PCC 6301 / SAUG 1402/1) (Anacystis nidulans).